Reading from the N-terminus, the 394-residue chain is Elongation factor Tu (394 aa).

A tr-type G domain is found at 10-204 (KPHVNVGTIG…HLDTYIPEPE (195 aa)). The segment at 19–26 (GHVDHGKT) is G1. 19 to 26 (GHVDHGKT) contributes to the GTP binding site. T26 provides a ligand contact to Mg(2+). The segment at 60 to 64 (GITIN) is G2. Positions 81–84 (DCPG) are G3. GTP-binding positions include 81–85 (DCPGH) and 136–139 (NKCD). The G4 stretch occupies residues 136 to 139 (NKCD). Residues 174 to 176 (SAL) form a G5 region.

This sequence belongs to the TRAFAC class translation factor GTPase superfamily. Classic translation factor GTPase family. EF-Tu/EF-1A subfamily. As to quaternary structure, monomer.

It localises to the cytoplasm. It catalyses the reaction GTP + H2O = GDP + phosphate + H(+). GTP hydrolase that promotes the GTP-dependent binding of aminoacyl-tRNA to the A-site of ribosomes during protein biosynthesis. In Aeromonas hydrophila subsp. hydrophila (strain ATCC 7966 / DSM 30187 / BCRC 13018 / CCUG 14551 / JCM 1027 / KCTC 2358 / NCIMB 9240 / NCTC 8049), this protein is Elongation factor Tu.